A 148-amino-acid chain; its full sequence is MRAYFVLLVAATAILTYGGATATYSTSKGEMNLTGTVENNRPTRSLRVAPSGGNGEERSWSTIYGISRSKAETVRDWLMPRLNQGMDVQALAREMGITSRQAATQHQNWDALVKYLKMYNYAVRGEKMSKSMAESVLLHNVLTAKNNF.

A signal peptide spans 1–22 (MRAYFVLLVAATAILTYGGATA). An N-linked (GlcNAc...) asparagine glycan is attached at Asn-32. The short motif at 44–58 (RSLRVAPSGGNGEER) is the RxLR-dEER element.

Belongs to the RxLR effector family.

The protein resides in the secreted. It is found in the host cytoplasm. It localises to the host cell membrane. Effector that suppresses flg22-induced post-translational MAP kinase activation in tomato but not in Arabidopsis. The perception of highly conserved pathogen- or microbe-associated molecular patterns (PAMPs/MAMPs), such as flg22, triggers converging signaling pathways recruiting MAP kinase cascades and inducing transcriptional re-programming, yielding a generic antimicrobial response. Also partially attenuates INF1-triggered cell death. This Phytophthora infestans (strain T30-4) (Potato late blight agent) protein is RxLR effector protein SFI7.